The chain runs to 412 residues: Probable tRNA pseudouridine synthase D (412 aa).

Catalysis depends on Asp-97, which acts as the Nucleophile. The TRUD domain maps to 167–370 (ALPNYYGYQR…YGGYRKVVLT (204 aa)).

It belongs to the pseudouridine synthase TruD family.

It catalyses the reaction uridine(13) in tRNA = pseudouridine(13) in tRNA. Functionally, could be responsible for synthesis of pseudouridine from uracil-13 in transfer RNAs. This is Probable tRNA pseudouridine synthase D from Pyrobaculum islandicum (strain DSM 4184 / JCM 9189 / GEO3).